The sequence spans 763 residues: Protein translocase subunit SecA 2 (763 aa).

ATP-binding positions include Gln83, 101 to 105 (GEGKT), and Asp490.

This sequence belongs to the SecA family. In terms of assembly, monomer and homodimer. Part of the essential Sec protein translocation apparatus which comprises SecA, SecYEG and auxiliary proteins SecDF. Other proteins may also be involved.

It is found in the cell membrane. The protein resides in the cytoplasm. It carries out the reaction ATP + H2O + cellular proteinSide 1 = ADP + phosphate + cellular proteinSide 2.. Functionally, part of the Sec protein translocase complex. Interacts with the SecYEG preprotein conducting channel. Has a central role in coupling the hydrolysis of ATP to the transfer of proteins into and across the cell membrane, serving as an ATP-driven molecular motor driving the stepwise translocation of polypeptide chains across the membrane. The chain is Protein translocase subunit SecA 2 from Corynebacterium efficiens (strain DSM 44549 / YS-314 / AJ 12310 / JCM 11189 / NBRC 100395).